The following is a 241-amino-acid chain: uncharacterized protein (241 aa).

Positions 84–216 constitute a GGDEF domain; the sequence is TVVSLVVCDL…APGPVVAGRD (133 aa). The segment at 215–241 is disordered; that stretch reads RDGEVVRLADSPPKSAHDRRRLRGNRP. The span at 231 to 241 shows a compositional bias: basic residues; it reads HDRRRLRGNRP.

This is an uncharacterized protein from Streptomyces griseus.